The chain runs to 170 residues: Acetolactate synthase small subunit (170 aa).

Residues 9-83 enclose the ACT domain; that stretch reads TLSVLVEDKP…NVIKIVEQEE (75 aa). K46 is covalently cross-linked (Isoglutamyl lysine isopeptide (Lys-Gln) (interchain with Q-Cter in protein Pup)).

Belongs to the acetolactate synthase small subunit family. As to quaternary structure, dimer of large and small chains.

It carries out the reaction 2 pyruvate + H(+) = (2S)-2-acetolactate + CO2. It functions in the pathway amino-acid biosynthesis; L-isoleucine biosynthesis; L-isoleucine from 2-oxobutanoate: step 1/4. It participates in amino-acid biosynthesis; L-valine biosynthesis; L-valine from pyruvate: step 1/4. In Mycolicibacterium smegmatis (strain ATCC 700084 / mc(2)155) (Mycobacterium smegmatis), this protein is Acetolactate synthase small subunit (ilvH).